A 308-amino-acid polypeptide reads, in one-letter code: D-2-hydroxyacid dehydrogenase (308 aa).

NAD(+) contacts are provided by residues 145–146 (TL), 224–226 (VAR), and aspartate 250. Arginine 226 is a catalytic residue. Glutamate 255 is an active-site residue. Residue histidine 274 is the Proton donor of the active site. 274–277 (HVSA) contacts NAD(+).

Belongs to the D-isomer specific 2-hydroxyacid dehydrogenase family. In terms of assembly, homotetramer.

Its function is as follows. Catalyzes the stereospecific NAD(P)H-dependent reduction of 2-ketocarboxylic acids into the corresponding D-2-hydroxycarboxylic acids. Can use both NADPH or NADH as reductant, displaying a marked preference for NADPH over NADH. Shows a broad substrate specificity, although it displays a marked preference for the 2-ketocarboxylic acids having an unbranched chain of 4-5 carbon atoms. This chain is D-2-hydroxyacid dehydrogenase (ddh), found in Haloferax mediterranei (strain ATCC 33500 / DSM 1411 / JCM 8866 / NBRC 14739 / NCIMB 2177 / R-4) (Halobacterium mediterranei).